We begin with the raw amino-acid sequence, 86 residues long: Anti-adapter protein IraP (86 aa).

Positions 1–36 (MKNLIAELLFKLAQKEEESKELCAQVEALEIIVTAM) form a coiled coil.

The protein belongs to the IraP family. Interacts with RssB.

It localises to the cytoplasm. In terms of biological role, inhibits RpoS proteolysis by regulating RssB activity, thereby increasing the stability of the sigma stress factor RpoS especially during phosphate starvation, but also in stationary phase and during nitrogen starvation. Its effect on RpoS stability is due to its interaction with RssB, which probably blocks the interaction of RssB with RpoS, and the consequent delivery of the RssB-RpoS complex to the ClpXP protein degradation pathway. The polypeptide is Anti-adapter protein IraP (Shigella sonnei (strain Ss046)).